We begin with the raw amino-acid sequence, 353 residues long: Nicotinate-nucleotide--dimethylbenzimidazole phosphoribosyltransferase (353 aa).

The active-site Proton acceptor is E320.

It belongs to the CobT family.

It catalyses the reaction 5,6-dimethylbenzimidazole + nicotinate beta-D-ribonucleotide = alpha-ribazole 5'-phosphate + nicotinate + H(+). It functions in the pathway nucleoside biosynthesis; alpha-ribazole biosynthesis; alpha-ribazole from 5,6-dimethylbenzimidazole: step 1/2. Catalyzes the synthesis of alpha-ribazole-5'-phosphate from nicotinate mononucleotide (NAMN) and 5,6-dimethylbenzimidazole (DMB). In Pseudoalteromonas translucida (strain TAC 125), this protein is Nicotinate-nucleotide--dimethylbenzimidazole phosphoribosyltransferase.